Here is a 26-residue protein sequence, read N- to C-terminus: Coenzyme PQQ synthesis protein A (26 aa).

Positions 16 to 20 (EINMY) form a cross-link, pyrroloquinoline quinone (Glu-Tyr).

The protein belongs to the PqqA family.

It participates in cofactor biosynthesis; pyrroloquinoline quinone biosynthesis. In terms of biological role, required for coenzyme pyrroloquinoline quinone (PQQ) biosynthesis. PQQ is probably formed by cross-linking a specific glutamate to a specific tyrosine residue and excising these residues from the peptide. This Cereibacter sphaeroides (strain ATCC 17029 / ATH 2.4.9) (Rhodobacter sphaeroides) protein is Coenzyme PQQ synthesis protein A.